Consider the following 463-residue polypeptide: Chromosomal replication initiator protein DnaA (463 aa).

The interval 1–83 (MSTNQIILTD…LQLFQHYNNT (83 aa)) is domain I, interacts with DnaA modulators. The segment at 83–124 (TIKSIEIITKELPGITQTVIALPTKTFADIGSSELNAENIFS) is domain II. The tract at residues 125–343 (TLDVRFTFDN…GALNKVIAHS (219 aa)) is domain III, AAA+ region. 4 residues coordinate ATP: Gly171, Gly173, Lys174, and Thr175. The domain IV, binds dsDNA stretch occupies residues 344-463 (NFTLKEITLE…INLLMKILQN (120 aa)).

The protein belongs to the DnaA family. As to quaternary structure, oligomerizes as a right-handed, spiral filament on DNA at oriC.

It localises to the cytoplasm. Functionally, plays an essential role in the initiation and regulation of chromosomal replication. ATP-DnaA binds to the origin of replication (oriC) to initiate formation of the DNA replication initiation complex once per cell cycle. Binds the DnaA box (a 9 base pair repeat at the origin) and separates the double-stranded (ds)DNA. Forms a right-handed helical filament on oriC DNA; dsDNA binds to the exterior of the filament while single-stranded (ss)DNA is stabiized in the filament's interior. The ATP-DnaA-oriC complex binds and stabilizes one strand of the AT-rich DNA unwinding element (DUE), permitting loading of DNA polymerase. After initiation quickly degrades to an ADP-DnaA complex that is not apt for DNA replication. Binds acidic phospholipids. In Rickettsia massiliae (strain Mtu5), this protein is Chromosomal replication initiator protein DnaA.